Here is a 224-residue protein sequence, read N- to C-terminus: Large ribosomal subunit protein uL1m (224 aa).

Belongs to the universal ribosomal protein uL1 family.

The protein resides in the mitochondrion. This is Large ribosomal subunit protein uL1m (RPL1) from Reclinomonas americana.